The following is a 184-amino-acid chain: Photosystem I assembly protein Ycf4 (184 aa).

The next 2 membrane-spanning stretches (helical) occupy residues 22–42 (FCWA…GISS) and 57–77 (ILFF…LFIS).

This sequence belongs to the Ycf4 family.

It localises to the plastid. The protein resides in the chloroplast thylakoid membrane. Seems to be required for the assembly of the photosystem I complex. The chain is Photosystem I assembly protein Ycf4 from Illicium oligandrum (Star anise).